A 437-amino-acid chain; its full sequence is Putrescine hydroxycinnamoyltransferase 3 (437 aa).

Active-site proton acceptor residues include H151 and D383.

It belongs to the plant acyltransferase family. As to expression, highly expressed in roots. Expressed at low levels in shoots and flowers.

In terms of biological role, hydroxycinnamoyl transferase that catalyzes the transfer of an acyl from p-coumaryol-CoA to putrescine, to produce coumaroyl putrescine. Can use feruloyl-CoA and caffeoyl-CoA as acyl donors. The chain is Putrescine hydroxycinnamoyltransferase 3 from Oryza sativa subsp. japonica (Rice).